A 2233-amino-acid polypeptide reads, in one-letter code: Acetyl-CoA carboxylase (2233 aa).

Ser2 is subject to N-acetylserine. Ser2 is modified (phosphoserine). The region spanning 58-567 is the Biotin carboxylation domain; sequence VISKILIANN…TTGWLDDLIT (510 aa). The ATP-grasp domain maps to 216–408; the sequence is KTGLVSVDDD…LPAAQLQIAM (193 aa). Residue 256–261 coordinates ATP; that stretch reads GGGGKG. Mn(2+)-binding residues include Glu365, Glu379, and Asn381. Residue Arg383 is part of the active site. The region spanning 694-768 is the Biotinyl-binding domain; sequence LEVENDPTQL…VAGDIMAIMT (75 aa). Lys735 carries the post-translational modification N6-biotinyllysine. A phosphoserine mark is found at Ser790, Ser1148, Ser1157, and Ser1162. A CoA carboxyltransferase N-terminal domain is found at 1486-1822; it reads PYPVKEWLQP…KRNMPVPILE (337 aa). Residues 1486–2141 form a carboxyltransferase region; that stretch reads PYPVKEWLQP…EEYLIKRLSH (656 aa). Acetyl-CoA is bound at residue 1627–1629; that stretch reads ARI. Position 1731 (Arg1731) interacts with CoA. The 316-residue stretch at 1826 to 2141 folds into the CoA carboxyltransferase C-terminal domain; the sequence is TWDRPVDFTP…EEYLIKRLSH (316 aa). Acetyl-CoA is bound at residue Gly1998. CoA is bound by residues Lys2034 and Arg2036.

In terms of assembly, homodimer. Biotin is required as a cofactor. Mn(2+) serves as cofactor.

The protein localises to the cytoplasm. It is found in the endoplasmic reticulum membrane. It carries out the reaction hydrogencarbonate + acetyl-CoA + ATP = malonyl-CoA + ADP + phosphate + H(+). The enzyme catalyses N(6)-biotinyl-L-lysyl-[protein] + hydrogencarbonate + ATP = N(6)-carboxybiotinyl-L-lysyl-[protein] + ADP + phosphate + H(+). Its pathway is lipid metabolism; malonyl-CoA biosynthesis; malonyl-CoA from acetyl-CoA: step 1/1. Its activity is regulated as follows. By phosphorylation. The catalytic activity is inhibited by soraphen A, a polyketide isolated from the myxobacterium Sorangium cellulosum and a potent inhibitor of fungal growth. In terms of biological role, carries out three functions: biotin carboxyl carrier protein, biotin carboxylase and carboxyltransferase. Involved in the synthesis of very-long-chain fatty acid synthesis which is required to maintain a functional nuclear envelope. Required for acylation and vacuolar membrane association of VAC8 which is necessary to maintain a normal morphology of the vacuole. This is Acetyl-CoA carboxylase (ACC1) from Saccharomyces cerevisiae (strain ATCC 204508 / S288c) (Baker's yeast).